The following is a 1366-amino-acid chain: Serine/threonine-protein kinase RUNKEL (1366 aa).

ATP is bound by residues 10–18 (IGHGKCSTV) and lysine 33. Residue aspartate 121 is the Proton acceptor of the active site. Disordered regions lie at residues 276 to 356 (TKPC…VNIL), 367 to 386 (QKENEKENYRRPLPNSNENC), 398 to 502 (LDFD…DSSK), and 524 to 549 (PSRKSDKEAVHSLSFETPQPSDFSKK). Residues 283-302 (RNGDRPNKTPPKYREKDRKG) are compositionally biased toward basic and acidic residues. The segment covering 304–313 (SKQNENSIQG) has biased composition (polar residues). The segment covering 367-376 (QKENEKENYR) has biased composition (basic and acidic residues). Residues 398–414 (LDFDENNDDEGPDESEG) are compositionally biased toward acidic residues. The span at 422 to 433 (QEERVMSHNENH) shows a compositional bias: basic and acidic residues. Over residues 438-454 (VVSSNVPDENSSANETP) the composition is skewed to polar residues. HEAT repeat units follow at residues 595–633 (LTNGPIMLVLVKVLRLSKTPAFRVQIASLIGLLIRHSTS), 638–675 (LANSGILDSLTNGLRDKHEKVRRFSMAALGELLFYIST), 699–737 (QVSNALISLVSSVLRKGEDDLTQVYALRTIENICSQGAY), 835–872 (TEEKNLFPSLLSIIEQGTEVLRGKALLFVAFLCKNSRR), 878–907 (FCNARFLPVVDRLAKEKDSYLQQCLEAFVN), 908–945 (VIASIIPGMLDTITNDIQQLMTGRRHGPVSPLNSRAPV), 946–986 (KTNA…LVEA), 992–1018 (DDFRVTLLQVLECITGDAPLVTQNGEI), 1019–1057 (IIREILPSLAAIYNGNKDGDARFLCLKIWFDSLTILLTE), 1072–1111 (ISNSHFLPLYPALIQDEDPIPAYAQKLLVMLVEFDYIKIS), 1279–1316 (TNLPKITPILDSWRRRKSTELHLLVLKRVLHCLGYACK), and 1329–1366 (GHDVSKINAIVSEMKNSDAAGLNSIASLVAMELQRLPR).

The protein belongs to the protein kinase superfamily. Ser/Thr protein kinase family. As to quaternary structure, binds to microtubules (MT). In terms of tissue distribution, expressed in proliferating tissues of seedlings, lateral roots, young rosette leaves, siliques, flowers, embryos and stems (including apical meristem).

It is found in the cytoplasm. The protein resides in the cytoskeleton. The protein localises to the phragmoplast. It localises to the spindle. It carries out the reaction L-seryl-[protein] + ATP = O-phospho-L-seryl-[protein] + ADP + H(+). The enzyme catalyses L-threonyl-[protein] + ATP = O-phospho-L-threonyl-[protein] + ADP + H(+). In terms of biological role, essential protein that regulates phragmoplast microtubule organization during cell plate expansion in cytokinesis during cell division, both somatic and syncytial. Required for endosperm cellularisation. In pollen development, involved in cellularisation during microsporogenesis by regulating radial microtubules (MT) organization in microspore mother cells. Seems to not have kinase activity. This chain is Serine/threonine-protein kinase RUNKEL, found in Arabidopsis thaliana (Mouse-ear cress).